The chain runs to 251 residues: Small ribosomal subunit protein uS2B (251 aa).

Position 2 is an N-acetylserine (S2). The segment covering 214-225 (AVEEASATGATE) has biased composition (low complexity). A disordered region spans residues 214 to 251 (AVEEASATGATEEATEEATEETTEATEWAEDNTENATW). Positions 226-251 (EATEEATEETTEATEWAEDNTENATW) are enriched in acidic residues.

Belongs to the universal ribosomal protein uS2 family. Component of the small ribosomal subunit. Mature ribosomes consist of a small (40S) and a large (60S) subunit. The 40S subunit contains about 33 different proteins and 1 molecule of RNA (18S). The 60S subunit contains about 49 different proteins and 3 molecules of RNA (25S, 5.8S and 5S). Interacts with RPS21.

The protein resides in the cytoplasm. Its function is as follows. Required for the assembly and/or stability of the 40S ribosomal subunit. Required for the processing of the 20S rRNA-precursor to mature 18S rRNA in a late step of the maturation of 40S ribosomal subunits. The sequence is that of Small ribosomal subunit protein uS2B from Vanderwaltozyma polyspora (strain ATCC 22028 / DSM 70294 / BCRC 21397 / CBS 2163 / NBRC 10782 / NRRL Y-8283 / UCD 57-17) (Kluyveromyces polysporus).